Consider the following 832-residue polypeptide: Dolichyl-phosphate-mannose--protein mannosyltransferase 6 (832 aa).

Residues 1–44 form a disordered region; sequence MATGYSTGVSPFDLDENNHNDSIHHRHQNHHSQSHDSSGERDDT. N-linked (GlcNAc...) asparagine glycans are attached at residues N20 and N59. Helical transmembrane passes span 135–155, 175–194, 206–227, 232–252, 266–286, 293–311, and 327–347; these read FYFD…GYLA, YVFM…PLAY, TCWL…SKFI, MLLF…TLAI, LEIK…SVKW, ALVG…YQTF, and LIHW…IYVA. An N-linked (GlcNAc...) asparagine glycan is attached at N357. The MIR 1 domain occupies 383–437; that stretch reads PRSVAFGSLVTIRSQGLSPNLIHSHPHNYPQGSQEQQVTTYGFKDDNNEFLFEFG. N-linked (GlcNAc...) asparagine glycosylation is present at N453. 2 consecutive MIR domains span residues 466-522 and 537-595; these read HVII…IEIQ and PSEI…IEKH. The next 4 helical transmembrane spans lie at 676 to 696, 723 to 743, 755 to 775, and 787 to 807; these read ITWI…VVGI, LLAA…VPFI, VPAL…ILNL, and IFKV…FWYF.

The protein belongs to the glycosyltransferase 39 family.

It localises to the endoplasmic reticulum membrane. It catalyses the reaction a di-trans,poly-cis-dolichyl beta-D-mannosyl phosphate + L-seryl-[protein] = 3-O-(alpha-D-mannosyl)-L-seryl-[protein] + a di-trans,poly-cis-dolichyl phosphate + H(+). The catalysed reaction is a di-trans,poly-cis-dolichyl beta-D-mannosyl phosphate + L-threonyl-[protein] = 3-O-(alpha-D-mannosyl)-L-threonyl-[protein] + a di-trans,poly-cis-dolichyl phosphate + H(+). Its pathway is protein modification; protein glycosylation. Functionally, protein mannosyltransferase (PMT) involved in hyphal morphogenesis and drug sensitivity. Transfers mannose from Dol-P-mannose to Ser or Thr residues on proteins. PMT1, PMT2 and PMT4 account for most of the protein-O-glycosylation activity, while PMT5 and PMT6 may specifically modulate a much narrower spectrum of target proteins. Required for biofilm formation and virulence. The chain is Dolichyl-phosphate-mannose--protein mannosyltransferase 6 (PMT6) from Candida albicans (strain SC5314 / ATCC MYA-2876) (Yeast).